Reading from the N-terminus, the 72-residue chain is Mitochondrial import protein 2 (72 aa).

Positions 1 to 22 (MAEVLDLEIDPISDGEDDTYSS) are disordered. Over 1–34 (MAEVLDLEIDPISDGEDDTYSSELDDDLKDSIEQ) the chain is Cytoplasmic. A helical transmembrane segment spans residues 35–52 (LERVLCLVVFPLLGKFLG). Residues 53–72 (RKFAFHAWARWLERRRLVSN) lie on the Mitochondrial intermembrane side of the membrane.

Belongs to the MIM2 family. As to quaternary structure, component of the mitochondrial outer import machinery (MIM) complex containing at least mim1 and mim2. Interacts with mim1. Interacts with mitophagy receptor atg43.

The protein resides in the mitochondrion outer membrane. Its function is as follows. Component of the mitochondrial outer import machinery (MIM) complex that mediates transport of proteins into mitochondrial compartments. Promotes the insertion of tom70 into the outer mitochondrial membrane. Promotes the insertion of atg43 into the outer mitochondrial membrane. Involved in import of the subset of proteins with multiple alpha-helical transmembrane segments. The sequence is that of Mitochondrial import protein 2 from Schizosaccharomyces pombe (strain 972 / ATCC 24843) (Fission yeast).